A 506-amino-acid polypeptide reads, in one-letter code: Histidine ammonia-lyase (506 aa).

The segment at residues 143–145 is a cross-link (5-imidazolinone (Ala-Gly)); the sequence is ASG. Ser144 bears the 2,3-didehydroalanine (Ser) mark.

This sequence belongs to the PAL/histidase family. Post-translationally, contains an active site 4-methylidene-imidazol-5-one (MIO), which is formed autocatalytically by cyclization and dehydration of residues Ala-Ser-Gly.

The protein resides in the cytoplasm. It catalyses the reaction L-histidine = trans-urocanate + NH4(+). Its pathway is amino-acid degradation; L-histidine degradation into L-glutamate; N-formimidoyl-L-glutamate from L-histidine: step 1/3. In Salmonella schwarzengrund (strain CVM19633), this protein is Histidine ammonia-lyase.